A 204-amino-acid polypeptide reads, in one-letter code: Oocyte-specific homeobox protein 1 (204 aa).

A disordered region spans residues 28–73 (EPARNLAFQMRQSPLVTPGSTTKSSLSVPERNLLKQESQGPSRQSG). Composition is skewed to polar residues over residues 37–54 (MRQS…SSLS) and 62–72 (KQESQGPSRQS). A DNA-binding region (homeobox) is located at residues 94-153 (FRKERTVYTKEQQGLLQKHFDECQYPNKKKIVELALSVGVTKREIKIWFKNNRAKYRRMN).

Belongs to the paired homeobox family. Obox subfamily. Specifically expressed in oocytes and early embryos.

The protein localises to the nucleus. In terms of biological role, transcription factor required for zygotic genome activation (ZGA), a critical event in early embryonic development during which the developmental control passes from maternally provided mRNAs to the expression of the zygotic genome after fertilization. Together with other Obox family members, required in early two-cell stage embryos to kick-start the major ZGA wave by facilitating RNA Polymerase II 'pre-configuration', during which RNA Polymerase II relocates from the initial one-cell stage binding targets to ZGA gene promoters and distal enhancers. Mechanistically, promotes recruitment of RNA Polymerase II from (CG-rich) non-ZGA genes to (CG-poor) ZGA genes at the two-cell stage. Binds to regulatory DNA sequences containing a 5'-ACNCCTTTAATCCCAG-3' sequence motif. Most maternal and zygotic Obox family proteins can compensate for one another. In addition to its role in ZGA, promotes embryonic stem cell pluripotency. This Mus musculus (Mouse) protein is Oocyte-specific homeobox protein 1.